The following is a 181-amino-acid chain: Oligoribonuclease (181 aa).

Residues Leu8–Leu171 form the Exonuclease domain. Residue Tyr129 is part of the active site.

This sequence belongs to the oligoribonuclease family.

It localises to the cytoplasm. 3'-to-5' exoribonuclease specific for small oligoribonucleotides. The chain is Oligoribonuclease from Salmonella choleraesuis (strain SC-B67).